Consider the following 400-residue polypeptide: Elongation factor Tu 2 (400 aa).

A tr-type G domain is found at 10 to 209 (KPHVNIGTIG…AVDEYIPTPQ (200 aa)). The tract at residues 19–26 (GHVDHGKT) is G1. 19-26 (GHVDHGKT) is a binding site for GTP. A Mg(2+)-binding site is contributed by T26. The interval 60–64 (GITIN) is G2. The tract at residues 81 to 84 (DCPG) is G3. Residues 81 to 85 (DCPGH) and 136 to 139 (NKAD) contribute to the GTP site. Positions 136–139 (NKAD) are G4. Positions 174–176 (SAL) are G5.

The protein belongs to the TRAFAC class translation factor GTPase superfamily. Classic translation factor GTPase family. EF-Tu/EF-1A subfamily. In terms of assembly, monomer.

Its subcellular location is the cytoplasm. The enzyme catalyses GTP + H2O = GDP + phosphate + H(+). In terms of biological role, GTP hydrolase that promotes the GTP-dependent binding of aminoacyl-tRNA to the A-site of ribosomes during protein biosynthesis. This is Elongation factor Tu 2 from Pelotomaculum thermopropionicum (strain DSM 13744 / JCM 10971 / SI).